The following is a 372-amino-acid chain: Chaperone protein DnaJ (372 aa).

The 66-residue stretch at D5–G70 folds into the J domain. Residues G134–E212 form a CR-type zinc finger. Zn(2+) contacts are provided by C147, C150, C164, C167, C186, C189, C200, and C203. CXXCXGXG motif repeat units lie at residues C147–G154, C164–G171, C186–G193, and C200–G207.

It belongs to the DnaJ family. In terms of assembly, homodimer. The cofactor is Zn(2+).

It is found in the cytoplasm. In terms of biological role, participates actively in the response to hyperosmotic and heat shock by preventing the aggregation of stress-denatured proteins and by disaggregating proteins, also in an autonomous, DnaK-independent fashion. Unfolded proteins bind initially to DnaJ; upon interaction with the DnaJ-bound protein, DnaK hydrolyzes its bound ATP, resulting in the formation of a stable complex. GrpE releases ADP from DnaK; ATP binding to DnaK triggers the release of the substrate protein, thus completing the reaction cycle. Several rounds of ATP-dependent interactions between DnaJ, DnaK and GrpE are required for fully efficient folding. Also involved, together with DnaK and GrpE, in the DNA replication of plasmids through activation of initiation proteins. The polypeptide is Chaperone protein DnaJ (Wolbachia pipientis wMel).